Reading from the N-terminus, the 294-residue chain is UDP-3-O-acyl-N-acetylglucosamine deacetylase (294 aa).

Zn(2+)-binding residues include His75, His232, and Asp236. Residue His259 is the Proton donor of the active site.

It belongs to the LpxC family. It depends on Zn(2+) as a cofactor.

The enzyme catalyses a UDP-3-O-[(3R)-3-hydroxyacyl]-N-acetyl-alpha-D-glucosamine + H2O = a UDP-3-O-[(3R)-3-hydroxyacyl]-alpha-D-glucosamine + acetate. Its pathway is glycolipid biosynthesis; lipid IV(A) biosynthesis; lipid IV(A) from (3R)-3-hydroxytetradecanoyl-[acyl-carrier-protein] and UDP-N-acetyl-alpha-D-glucosamine: step 2/6. Catalyzes the hydrolysis of UDP-3-O-myristoyl-N-acetylglucosamine to form UDP-3-O-myristoylglucosamine and acetate, the committed step in lipid A biosynthesis. The sequence is that of UDP-3-O-acyl-N-acetylglucosamine deacetylase from Campylobacter concisus (strain 13826).